Consider the following 178-residue polypeptide: Crossover junction endodeoxyribonuclease RuvC (178 aa).

Catalysis depends on residues Asp18, Glu78, and Asp150. Mg(2+) is bound by residues Asp18, Glu78, and Asp150.

The protein belongs to the RuvC family. In terms of assembly, homodimer which binds Holliday junction (HJ) DNA. The HJ becomes 2-fold symmetrical on binding to RuvC with unstacked arms; it has a different conformation from HJ DNA in complex with RuvA. In the full resolvosome a probable DNA-RuvA(4)-RuvB(12)-RuvC(2) complex forms which resolves the HJ. The cofactor is Mg(2+).

It localises to the cytoplasm. The enzyme catalyses Endonucleolytic cleavage at a junction such as a reciprocal single-stranded crossover between two homologous DNA duplexes (Holliday junction).. Its function is as follows. The RuvA-RuvB-RuvC complex processes Holliday junction (HJ) DNA during genetic recombination and DNA repair. Endonuclease that resolves HJ intermediates. Cleaves cruciform DNA by making single-stranded nicks across the HJ at symmetrical positions within the homologous arms, yielding a 5'-phosphate and a 3'-hydroxyl group; requires a central core of homology in the junction. The consensus cleavage sequence is 5'-(A/T)TT(C/G)-3'. Cleavage occurs on the 3'-side of the TT dinucleotide at the point of strand exchange. HJ branch migration catalyzed by RuvA-RuvB allows RuvC to scan DNA until it finds its consensus sequence, where it cleaves and resolves the cruciform DNA. The protein is Crossover junction endodeoxyribonuclease RuvC of Granulibacter bethesdensis (strain ATCC BAA-1260 / CGDNIH1).